The following is a 161-amino-acid chain: uncharacterized protein (161 aa).

An RING-type zinc finger spans residues 72–134; the sequence is CAICLDNLQN…EAQQTCPTCR (63 aa). Positions 140-161 are disordered; sequence DKEVEEEERQRNLEELHDSMYG.

This is an uncharacterized protein from Caenorhabditis elegans.